Consider the following 423-residue polypeptide: Site-specific recombinase Flp (423 aa).

In terms of domain architecture, Tyr recombinase Flp-type spans 136 to 422; it reads GNSHSKKMLK…DYLSSYINRR (287 aa). Tyrosine 343 serves as the catalytic O-(3'-phospho-DNA)-tyrosine intermediate.

It belongs to the 'phage' integrase family. In terms of assembly, homotetramer.

Its function is as follows. Part of the plasmid amplification system, which corrects any decrease in copy number caused by a rare missegregation event. Catalyzes the recombination between the large inverted repetitions of the 2-micron plasmid during plasmid replication. This recombination event changes the direction of one of the two replication forks in the bidirectionally replicating molecule, effectively resulting in multiple rounds of replication from a single initiation event. Binds specifically to the FLP recognition target (FRT) site where it induces DNA to bend. Three types of bend exist. Type I is approximately 60 degrees and results from 1 FLP molecule binding to 1 symmetry element. Type II is &gt;144 degrees and results from FLP molecules binding to symmetry elements a and b. Type III is approximately 65 degrees and results from FLP molecules binding to symmetry elements b and c. This Saccharomyces cerevisiae (strain ATCC 204508 / S288c) (Baker's yeast) protein is Site-specific recombinase Flp (FLP1).